A 257-amino-acid chain; its full sequence is Hydroxyacylglutathione hydrolase (257 aa).

Zn(2+) is bound by residues histidine 54, histidine 56, aspartate 58, histidine 59, histidine 109, aspartate 129, and histidine 167.

This sequence belongs to the metallo-beta-lactamase superfamily. Glyoxalase II family. As to quaternary structure, monomer. It depends on Zn(2+) as a cofactor.

It catalyses the reaction an S-(2-hydroxyacyl)glutathione + H2O = a 2-hydroxy carboxylate + glutathione + H(+). It participates in secondary metabolite metabolism; methylglyoxal degradation; (R)-lactate from methylglyoxal: step 2/2. Functionally, thiolesterase that catalyzes the hydrolysis of S-D-lactoyl-glutathione to form glutathione and D-lactic acid. The polypeptide is Hydroxyacylglutathione hydrolase (Marinomonas sp. (strain MWYL1)).